A 288-amino-acid chain; its full sequence is MTTPQPFAHRFSQLAEQRSPFCLGIDPSRDLLTRWGLPDNARGLRDFCERVADAAGSSVAVVKPQSAFFERHGPEGLQVLQELMRRFKSVGTLTLLDVKRGDIGSTMEAYAETVFGEGSAYEADAATFTAYLGLGALLKTLERARASGAAAFLVVRSSNPEGTSLQMSRGEDGRTVAEALADGLRAFNEKPGQDAAPVAGAVMGATLPDSDRGVIERLGGALLLTPGIGAQGAGFDDLKRLFAGREAQVIPTATRSVLEAGPDTAALRQALERHLAPARAFRATARPS.

The active-site Proton donor is Lys-99.

The protein belongs to the OMP decarboxylase family. Type 2 subfamily.

It catalyses the reaction orotidine 5'-phosphate + H(+) = UMP + CO2. Its pathway is pyrimidine metabolism; UMP biosynthesis via de novo pathway; UMP from orotate: step 2/2. The protein is Orotidine 5'-phosphate decarboxylase (pyrF) of Myxococcus xanthus (strain DK1622).